The following is a 735-amino-acid chain: Trafficking protein particle complex subunit 12 (735 aa).

Disordered stretches follow at residues 1–204 and 237–276; these read MEDA…QPSP and NPGAGSPAPASPPPLAVPGTEGRPEPVAMRGPQAAAPPAS. The segment covering 13–22 has biased composition (pro residues); it reads PEAPHPPQLA. Positions 34–50 are enriched in acidic residues; sequence ETIDLGGDEFGSEENET. 2 positions are modified to phosphoserine: Ser109 and Ser184. TPR repeat units lie at residues 545 to 578, 580 to 613, 620 to 653, and 654 to 687; these read GRVMYSMANCLLLMKDYVLAVEAYHSVIKYYPEQ, PQLLSGIGRISLQIGDIKTAEKYFQDVEKVTQKL, IMVLMNSAFLHLGQNNFAEAHRFFTEILRMDPRN, and AVANNNAAVCLLYLGKLKDSLRQLEAMVQQDPRH.

As to quaternary structure, component of the multisubunit TRAPP (transport protein particle) complex, which includes at least TRAPPC2, TRAPPC2L, TRAPPC3, TRAPPC3L, TRAPPC4, TRAPPC5, TRAPPC8, TRAPPC9, TRAPPC10, TRAPPC11 and TRAPPC12. Interacts with CENPE. Phosphorylated as the cells enter mitosis but is dephosphorylated at or before the onset of anaphase. The phosphorylated form recruits CENPE to kinetochores more efficiently than the non-phosphorylated form.

The protein localises to the endoplasmic reticulum-Golgi intermediate compartment. Its subcellular location is the nucleus. In terms of biological role, component of the TRAPP complex, which is involved in endoplasmic reticulum to Golgi apparatus trafficking at a very early stage. Also plays a role in chromosome congression, kinetochore assembly and stability and controls the recruitment of CENPE to the kinetochores. The protein is Trafficking protein particle complex subunit 12 of Homo sapiens (Human).